The following is a 210-amino-acid chain: Outer-membrane lipoprotein LolB (210 aa).

A signal peptide spans methionine 1–glycine 18. Cysteine 19 carries N-palmitoyl cysteine lipidation. Cysteine 19 is lipidated: S-diacylglycerol cysteine.

Belongs to the LolB family. As to quaternary structure, monomer.

The protein resides in the cell outer membrane. In terms of biological role, plays a critical role in the incorporation of lipoproteins in the outer membrane after they are released by the LolA protein. In Actinobacillus pleuropneumoniae serotype 7 (strain AP76), this protein is Outer-membrane lipoprotein LolB.